Reading from the N-terminus, the 903-residue chain is Valine--tRNA ligase (903 aa).

Residues 1-15 (MVCVTDQNNENPSQN) show a composition bias toward polar residues. The disordered stretch occupies residues 1 to 22 (MVCVTDQNNENPSQNRADKLPK). Residues 61-71 (PNVTGQLHMGH) carry the 'HIGH' region motif. The 'KMSKS' region motif lies at 552–556 (KMSKS). Lysine 555 is an ATP binding site. A coiled-coil region spans residues 836–902 (TVDVAAERKR…ERITKRLEEL (67 aa)).

This sequence belongs to the class-I aminoacyl-tRNA synthetase family. ValS type 1 subfamily. Monomer.

It localises to the cytoplasm. It catalyses the reaction tRNA(Val) + L-valine + ATP = L-valyl-tRNA(Val) + AMP + diphosphate. Functionally, catalyzes the attachment of valine to tRNA(Val). As ValRS can inadvertently accommodate and process structurally similar amino acids such as threonine, to avoid such errors, it has a 'posttransfer' editing activity that hydrolyzes mischarged Thr-tRNA(Val) in a tRNA-dependent manner. In Corynebacterium efficiens (strain DSM 44549 / YS-314 / AJ 12310 / JCM 11189 / NBRC 100395), this protein is Valine--tRNA ligase.